Reading from the N-terminus, the 505-residue chain is NADH-quinone oxidoreductase subunit N 1 (505 aa).

14 helical membrane-spanning segments follow: residues 18 to 38 (LIPEIALGCLALLLLVVEMVL), 45 to 65 (LIATIAIIGQFGILGWVAWDF), 84 to 104 (YVGQAMRVFFLLSSIFVSILA), 116 to 136 (IEFYHIVLVATAAMMLLAQAN), 138 to 158 (FVLFFVALETLTVGLYILVSY), 173 to 193 (LIMGALSSSLLLFGIVLLYGV), 223 to 243 (FLAAAGIVLVLSGIAFKIGAF), 271 to 291 (AGFAILLVLVNSVFGPYWWLV), 292 to 312 (QPVLVAMAVATILFGNIAALT), 319 to 339 (LIGLSGVSHAGFLLIGIIASH), 345 to 365 (VGAVLFYLFAYLLATFAVFGV), 391 to 411 (FLAAILAVALGSLAGIPPLAG), 429 to 449 (GLLAVAIVGVVISIYYYFGWI), and 473 to 493 (VGAAAGVALATLALCSILFGV).

This sequence belongs to the complex I subunit 2 family. In terms of assembly, NDH-1 is composed of 14 different subunits. Subunits NuoA, H, J, K, L, M, N constitute the membrane sector of the complex.

It localises to the cell inner membrane. The enzyme catalyses a quinone + NADH + 5 H(+)(in) = a quinol + NAD(+) + 4 H(+)(out). Its function is as follows. NDH-1 shuttles electrons from NADH, via FMN and iron-sulfur (Fe-S) centers, to quinones in the respiratory chain. The immediate electron acceptor for the enzyme in this species is believed to be ubiquinone. Couples the redox reaction to proton translocation (for every two electrons transferred, four hydrogen ions are translocated across the cytoplasmic membrane), and thus conserves the redox energy in a proton gradient. This Opitutus terrae (strain DSM 11246 / JCM 15787 / PB90-1) protein is NADH-quinone oxidoreductase subunit N 1.